The primary structure comprises 208 residues: Protein-L-isoaspartate O-methyltransferase (208 aa).

The active site involves S59.

This sequence belongs to the methyltransferase superfamily. L-isoaspartyl/D-aspartyl protein methyltransferase family.

It localises to the cytoplasm. The catalysed reaction is [protein]-L-isoaspartate + S-adenosyl-L-methionine = [protein]-L-isoaspartate alpha-methyl ester + S-adenosyl-L-homocysteine. In terms of biological role, catalyzes the methyl esterification of L-isoaspartyl residues in peptides and proteins that result from spontaneous decomposition of normal L-aspartyl and L-asparaginyl residues. It plays a role in the repair and/or degradation of damaged proteins. The polypeptide is Protein-L-isoaspartate O-methyltransferase (Vibrio atlanticus (strain LGP32) (Vibrio splendidus (strain Mel32))).